The primary structure comprises 100 residues: Non-histone chromosomal protein HMG-14 (100 aa).

The segment at 1 to 100 is disordered; sequence MPKRKVSSAE…EAGEKEAKSD (100 aa). Position 7 is an ADP-ribosylserine (Ser-7). The residue at position 8 (Ser-8) is a Phosphoserine. The residue at position 14 (Lys-14) is an N6-acetyllysine. Phosphoserine; by RPS6KA5 is present on Ser-21. Ser-25 carries the post-translational modification ADP-ribosylserine; alternate. Ser-25 carries the post-translational modification Phosphoserine; alternate; by RPS6KA5. N6-acetyllysine is present on Lys-27. Composition is skewed to basic and acidic residues over residues 30-50 and 69-85; these read AKVE…DKKV and ETKE…KTEE. Thr-81 bears the Phosphothreonine mark. The residue at position 82 (Lys-82) is an N6-acetyllysine. 3 positions are modified to phosphoserine: Ser-86, Ser-89, and Ser-99.

In terms of assembly, interacts with transcriptional regulator SEHBP. In terms of processing, phosphorylation on Ser-21 and Ser-25 weakens binding to nucleosomes and increases the rate of H3 phosphorylation. Phosphorylation favors cytoplasmic localization.

Its subcellular location is the nucleus. It is found in the cytoplasm. Binds to the inner side of the nucleosomal DNA thus altering the interaction between the DNA and the histone octamer. May be involved in the process which maintains transcribable genes in a unique chromatin conformation. Inhibits the phosphorylation of nucleosomal histones H3 and H2A by RPS6KA5/MSK1 and RPS6KA3/RSK2. The chain is Non-histone chromosomal protein HMG-14 (HMGN1) from Homo sapiens (Human).